The sequence spans 362 residues: Poly(rC)-binding protein 2 (362 aa).

2 consecutive KH domains span residues 13–75 and 97–162; these read TLTI…FAMI and PVTL…VKQI. K115 participates in a covalent cross-link: Glycyl lysine isopeptide (Lys-Gly) (interchain with G-Cter in SUMO2). Phosphoserine is present on S169. A Glycyl lysine isopeptide (Lys-Gly) (interchain with G-Cter in SUMO2) cross-link involves residue K181. Phosphoserine is present on residues S185 and S268. Residues 284–348 enclose the KH 3 domain; the sequence is TTSHELTIPN…ASISLAQYLI (65 aa). Residue K319 forms a Glycyl lysine isopeptide (Lys-Gly) (interchain with G-Cter in SUMO2) linkage. A phosphoserine mark is found at S361 and S362.

Identified in a mRNP complex, at least composed of DHX9, DDX3X, ELAVL1, HNRNPU, IGF2BP1, ILF3, PABPC1, PCBP2, PTBP2, STAU1, STAU2, SYNCRIP and YBX1. Interacts with IFIH1 and RNF135. Interacts with MAVS (via C-terminus) and ITCH (via WW domains). Interacts with CGAS; preventing the formation of liquid-like droplets in which CGAS is activated. Phosphorylated. The non-phosphorylated form(s) exhibited the strongest poly(rC)-binding activity.

Its subcellular location is the nucleus. The protein resides in the cytoplasm. Single-stranded nucleic acid binding protein that binds preferentially to oligo dC. Major cellular poly(rC)-binding protein. Also binds poly(rU). Acts as a negative regulator of antiviral signaling. Negatively regulates cellular antiviral responses mediated by MAVS signaling. It acts as an adapter between MAVS and the E3 ubiquitin ligase ITCH, therefore triggering MAVS ubiquitination and degradation. Negativeley regulates the cGAS-STING pathway via interaction with CGAS, preventing the formation of liquid-like droplets in which CGAS is activated. Together with PCBP1, required for erythropoiesis, possibly by regulating mRNA splicing. The sequence is that of Poly(rC)-binding protein 2 (Pcbp2) from Mus musculus (Mouse).